Reading from the N-terminus, the 274-residue chain is 2-dehydro-3-deoxyphosphooctonate aldolase (274 aa).

The protein belongs to the KdsA family.

It is found in the cytoplasm. The catalysed reaction is D-arabinose 5-phosphate + phosphoenolpyruvate + H2O = 3-deoxy-alpha-D-manno-2-octulosonate-8-phosphate + phosphate. Its pathway is carbohydrate biosynthesis; 3-deoxy-D-manno-octulosonate biosynthesis; 3-deoxy-D-manno-octulosonate from D-ribulose 5-phosphate: step 2/3. It participates in bacterial outer membrane biogenesis; lipopolysaccharide biosynthesis. The polypeptide is 2-dehydro-3-deoxyphosphooctonate aldolase (Rickettsia typhi (strain ATCC VR-144 / Wilmington)).